A 205-amino-acid polypeptide reads, in one-letter code: Non-specific lipid transfer protein GPI-anchored 21 (205 aa).

The signal sequence occupies residues 1–27 (MNSNSFLISAALIFSLLSSNSPTSILA). 4 cysteine pairs are disulfide-bonded: Cys33-Cys75, Cys44-Cys59, Cys60-Cys100, and Cys73-Cys109. Residue Asn89 is glycosylated (N-linked (GlcNAc...) asparagine). The interval 116 to 182 (LPTPGPASFG…FAPPPPSSSP (67 aa)) is disordered. Residues 126-156 (PTTSPTDSQTSDPEGSASFRPPTSPTTSQTP) are compositionally biased toward low complexity. The GPI-anchor amidated serine moiety is linked to residue Ser179. A propeptide spans 180 to 205 (SSPSSSHSLKLSYLLFAFAFTIIKFI) (removed in mature form).

The protein belongs to the plant LTP family.

The protein localises to the cell membrane. Probable lipid transfer protein. This chain is Non-specific lipid transfer protein GPI-anchored 21, found in Arabidopsis thaliana (Mouse-ear cress).